The primary structure comprises 308 residues: Glutaminase (308 aa).

Substrate contacts are provided by serine 66, asparagine 117, glutamate 161, asparagine 168, tyrosine 192, tyrosine 244, and valine 262.

It belongs to the glutaminase family. As to quaternary structure, homotetramer.

It carries out the reaction L-glutamine + H2O = L-glutamate + NH4(+). In Enterobacter sp. (strain 638), this protein is Glutaminase.